The chain runs to 301 residues: Probable alpha-L-glutamate ligase (301 aa).

The 184-residue stretch at 104–287 (LQLLSRKGIG…VAGMIFDFIE (184 aa)) folds into the ATP-grasp domain. Residues Lys-141, 178-179 (EF), Asp-187, and 211-213 (RSN) contribute to the ATP site. Asp-248, Glu-260, and Asn-262 together coordinate Mg(2+). Mn(2+)-binding residues include Asp-248, Glu-260, and Asn-262.

The protein belongs to the RimK family. The cofactor is Mg(2+). It depends on Mn(2+) as a cofactor.

The polypeptide is Probable alpha-L-glutamate ligase (Vibrio parahaemolyticus serotype O3:K6 (strain RIMD 2210633)).